A 450-amino-acid chain; its full sequence is UDP-N-acetylmuramoylalanine--D-glutamate ligase (450 aa).

112-118 (GSNGKTT) lines the ATP pocket.

The protein belongs to the MurCDEF family.

Its subcellular location is the cytoplasm. The catalysed reaction is UDP-N-acetyl-alpha-D-muramoyl-L-alanine + D-glutamate + ATP = UDP-N-acetyl-alpha-D-muramoyl-L-alanyl-D-glutamate + ADP + phosphate + H(+). Its pathway is cell wall biogenesis; peptidoglycan biosynthesis. Cell wall formation. Catalyzes the addition of glutamate to the nucleotide precursor UDP-N-acetylmuramoyl-L-alanine (UMA). This chain is UDP-N-acetylmuramoylalanine--D-glutamate ligase, found in Cytophaga hutchinsonii (strain ATCC 33406 / DSM 1761 / CIP 103989 / NBRC 15051 / NCIMB 9469 / D465).